A 676-amino-acid polypeptide reads, in one-letter code: ATP-dependent zinc metalloprotease FTSH 2, chloroplastic (676 aa).

The N-terminal 32 residues, 1–32, are a transit peptide targeting the chloroplast; that stretch reads MAPTSMSLAAKTPLPFSTLPSSGVAQRPVSVT. The chain crosses the membrane as a helical span at residues 155-175; it reads LLFNLIGNLAFPLILIGGLFL. 254-261 contributes to the ATP binding site; it reads GPPGTGKT. Zn(2+) is bound at residue H475. The active site involves E476. Zn(2+) is bound by residues H479 and D553.

It in the N-terminal section; belongs to the AAA ATPase family. The protein in the C-terminal section; belongs to the peptidase M41 family. Zn(2+) is required as a cofactor.

It is found in the plastid. It localises to the chloroplast thylakoid membrane. Its function is as follows. Probable ATP-dependent zinc metallopeptidase. The sequence is that of ATP-dependent zinc metalloprotease FTSH 2, chloroplastic (FTSH2) from Oryza sativa subsp. japonica (Rice).